A 368-amino-acid chain; its full sequence is Chaperone protein DnaJ (368 aa).

The J domain occupies 5–69 (DYYEVLGLSQ…QKRAQYDQFG (65 aa)). The segment at 130–212 (GKELNVEIPV…CHGSGKVRKR (83 aa)) adopts a CR-type zinc-finger fold. Positions 143, 146, 160, 163, 186, 189, 200, and 203 each coordinate Zn(2+). 4 CXXCXGXG motif repeats span residues 143–150 (CDTCKGSG), 160–167 (CKHCSGSG), 186–193 (CGHCSGTG), and 200–207 (CTTCHGSG).

It belongs to the DnaJ family. As to quaternary structure, homodimer. Zn(2+) serves as cofactor.

The protein resides in the cytoplasm. Participates actively in the response to hyperosmotic and heat shock by preventing the aggregation of stress-denatured proteins and by disaggregating proteins, also in an autonomous, DnaK-independent fashion. Unfolded proteins bind initially to DnaJ; upon interaction with the DnaJ-bound protein, DnaK hydrolyzes its bound ATP, resulting in the formation of a stable complex. GrpE releases ADP from DnaK; ATP binding to DnaK triggers the release of the substrate protein, thus completing the reaction cycle. Several rounds of ATP-dependent interactions between DnaJ, DnaK and GrpE are required for fully efficient folding. Also involved, together with DnaK and GrpE, in the DNA replication of plasmids through activation of initiation proteins. The polypeptide is Chaperone protein DnaJ (Bacillus mycoides (strain KBAB4) (Bacillus weihenstephanensis)).